A 339-amino-acid polypeptide reads, in one-letter code: DNA-directed RNA polymerase subunit alpha (339 aa).

The alpha N-terminal domain (alpha-NTD) stretch occupies residues 1–238; that stretch reads MVDPIVTKNW…EQLSIFINFD (238 aa). Residues 255 to 339 form an alpha C-terminal domain (alpha-CTD) region; sequence LNENLFRSVD…KAAPQGAPKV (85 aa).

This sequence belongs to the RNA polymerase alpha chain family. In terms of assembly, homodimer. The RNAP catalytic core consists of 2 alpha, 1 beta, 1 beta' and 1 omega subunit. When a sigma factor is associated with the core the holoenzyme is formed, which can initiate transcription.

The catalysed reaction is RNA(n) + a ribonucleoside 5'-triphosphate = RNA(n+1) + diphosphate. Its function is as follows. DNA-dependent RNA polymerase catalyzes the transcription of DNA into RNA using the four ribonucleoside triphosphates as substrates. In Anaeromyxobacter sp. (strain Fw109-5), this protein is DNA-directed RNA polymerase subunit alpha.